The sequence spans 146 residues: Tol-Pal system protein TolR (146 aa).

Residues 16 to 36 traverse the membrane as a helical segment; sequence VVPYIDVMLVLLVIFMVTAPM.

The protein belongs to the ExbD/TolR family. As to quaternary structure, the Tol-Pal system is composed of five core proteins: the inner membrane proteins TolA, TolQ and TolR, the periplasmic protein TolB and the outer membrane protein Pal. They form a network linking the inner and outer membranes and the peptidoglycan layer.

Its subcellular location is the cell inner membrane. Its function is as follows. Part of the Tol-Pal system, which plays a role in outer membrane invagination during cell division and is important for maintaining outer membrane integrity. The chain is Tol-Pal system protein TolR from Pseudomonas aeruginosa (strain ATCC 15692 / DSM 22644 / CIP 104116 / JCM 14847 / LMG 12228 / 1C / PRS 101 / PAO1).